The sequence spans 100 residues: Ribosomal processing cysteine protease Prp (100 aa).

His-16 acts as the Proton donor in catalysis. The active-site Nucleophile is Cys-28.

This sequence belongs to the Prp family. As to quaternary structure, homodimer.

Functionally, an essential cysteine protease that cleaves the N-terminus from ribosomal protein bL27. This Mycoplasma pneumoniae (strain ATCC 29342 / M129 / Subtype 1) (Mycoplasmoides pneumoniae) protein is Ribosomal processing cysteine protease Prp.